Here is a 94-residue protein sequence, read N- to C-terminus: Citrate lyase acyl carrier protein (94 aa).

At Ser-14 the chain carries O-(phosphoribosyl dephospho-coenzyme A)serine.

Belongs to the CitD family. In terms of assembly, oligomer with a subunit composition of (alpha,beta,gamma)6.

The protein localises to the cytoplasm. Functionally, covalent carrier of the coenzyme of citrate lyase. The polypeptide is Citrate lyase acyl carrier protein (Fusobacterium nucleatum subsp. nucleatum (strain ATCC 25586 / DSM 15643 / BCRC 10681 / CIP 101130 / JCM 8532 / KCTC 2640 / LMG 13131 / VPI 4355)).